The following is a 260-amino-acid chain: 5'-nucleotidase SurE (260 aa).

Asp10, Asp11, Ser41, and Asn95 together coordinate a divalent metal cation.

It belongs to the SurE nucleotidase family. A divalent metal cation is required as a cofactor.

It localises to the cytoplasm. It catalyses the reaction a ribonucleoside 5'-phosphate + H2O = a ribonucleoside + phosphate. In terms of biological role, nucleotidase that shows phosphatase activity on nucleoside 5'-monophosphates. This Methanoregula boonei (strain DSM 21154 / JCM 14090 / 6A8) protein is 5'-nucleotidase SurE.